Consider the following 354-residue polypeptide: NADH-quinone oxidoreductase subunit H (354 aa).

A run of 8 helical transmembrane segments spans residues 22–42 (ILIR…YLIL), 91–111 (YLIA…VIPF), 124–144 (LLYV…AGWA), 168–188 (MGFA…SAIV), 203–223 (ILSW…ISGV), 255–275 (LFFL…ALMF), 291–311 (IPGF…FIWI), and 326–346 (LGWK…AIWI).

Belongs to the complex I subunit 1 family. As to quaternary structure, NDH-1 is composed of 14 different subunits. Subunits NuoA, H, J, K, L, M, N constitute the membrane sector of the complex.

The protein localises to the cell inner membrane. The enzyme catalyses a quinone + NADH + 5 H(+)(in) = a quinol + NAD(+) + 4 H(+)(out). Functionally, NDH-1 shuttles electrons from NADH, via FMN and iron-sulfur (Fe-S) centers, to quinones in the respiratory chain. The immediate electron acceptor for the enzyme in this species is believed to be ubiquinone. Couples the redox reaction to proton translocation (for every two electrons transferred, four hydrogen ions are translocated across the cytoplasmic membrane), and thus conserves the redox energy in a proton gradient. This subunit may bind ubiquinone. The polypeptide is NADH-quinone oxidoreductase subunit H (Cupriavidus taiwanensis (strain DSM 17343 / BCRC 17206 / CCUG 44338 / CIP 107171 / LMG 19424 / R1) (Ralstonia taiwanensis (strain LMG 19424))).